The chain runs to 336 residues: Ketol-acid reductoisomerase (NADP(+)) (336 aa).

In terms of domain architecture, KARI N-terminal Rossmann spans 1–181 (MKVYYDQDAD…GGGRSGIIET (181 aa)). NADP(+) contacts are provided by residues 24–27 (YGSQ), arginine 47, serine 50, and serine 52. Histidine 107 is an active-site residue. Glycine 133 lines the NADP(+) pocket. The 146-residue stretch at 182-327 (SFREETETDL…ERLRGMMPWI (146 aa)) folds into the KARI C-terminal knotted domain. Aspartate 190, glutamate 194, glutamate 226, and glutamate 230 together coordinate Mg(2+). Serine 251 provides a ligand contact to substrate.

Belongs to the ketol-acid reductoisomerase family. Mg(2+) is required as a cofactor.

The enzyme catalyses (2R)-2,3-dihydroxy-3-methylbutanoate + NADP(+) = (2S)-2-acetolactate + NADPH + H(+). It catalyses the reaction (2R,3R)-2,3-dihydroxy-3-methylpentanoate + NADP(+) = (S)-2-ethyl-2-hydroxy-3-oxobutanoate + NADPH + H(+). The protein operates within amino-acid biosynthesis; L-isoleucine biosynthesis; L-isoleucine from 2-oxobutanoate: step 2/4. Its pathway is amino-acid biosynthesis; L-valine biosynthesis; L-valine from pyruvate: step 2/4. Functionally, involved in the biosynthesis of branched-chain amino acids (BCAA). Catalyzes an alkyl-migration followed by a ketol-acid reduction of (S)-2-acetolactate (S2AL) to yield (R)-2,3-dihydroxy-isovalerate. In the isomerase reaction, S2AL is rearranged via a Mg-dependent methyl migration to produce 3-hydroxy-3-methyl-2-ketobutyrate (HMKB). In the reductase reaction, this 2-ketoacid undergoes a metal-dependent reduction by NADPH to yield (R)-2,3-dihydroxy-isovalerate. The polypeptide is Ketol-acid reductoisomerase (NADP(+)) (Halorhodospira halophila (strain DSM 244 / SL1) (Ectothiorhodospira halophila (strain DSM 244 / SL1))).